The primary structure comprises 290 residues: 4-hydroxybenzoate octaprenyltransferase (290 aa).

8 helical membrane passes run 40-60, 99-119, 120-140, 142-162, 165-185, 215-235, 239-259, and 267-287; these read IAGA…GVVI, LALF…LNEL, TFWL…TKRF, FMPQ…AFAA, GEVP…TVAY, LMIA…GHRL, WPWY…HSLI, and SFHA…GLYF.

The protein belongs to the UbiA prenyltransferase family. The cofactor is Mg(2+).

The protein localises to the cell inner membrane. It catalyses the reaction all-trans-octaprenyl diphosphate + 4-hydroxybenzoate = 4-hydroxy-3-(all-trans-octaprenyl)benzoate + diphosphate. It functions in the pathway cofactor biosynthesis; ubiquinone biosynthesis. Catalyzes the prenylation of para-hydroxybenzoate (PHB) with an all-trans polyprenyl group. Mediates the second step in the final reaction sequence of ubiquinone-8 (UQ-8) biosynthesis, which is the condensation of the polyisoprenoid side chain with PHB, generating the first membrane-bound Q intermediate 3-octaprenyl-4-hydroxybenzoate. The sequence is that of 4-hydroxybenzoate octaprenyltransferase from Alcanivorax borkumensis (strain ATCC 700651 / DSM 11573 / NCIMB 13689 / SK2).